Reading from the N-terminus, the 700-residue chain is Constitutive coactivator of peroxisome proliferator-activated receptor gamma (700 aa).

The protein belongs to the constitutive coactivator of PPAR-gamma family. As to quaternary structure, interacts with ESR1 and RXRA. Interacts with PPARG; in a ligand-independent manner.

It localises to the nucleus. Its function is as follows. Functions as a transactivator of PPARG and ESR1. Functions in adipogenesis through PPARG activation. The protein is Constitutive coactivator of peroxisome proliferator-activated receptor gamma (FAM120B) of Bos taurus (Bovine).